A 648-amino-acid chain; its full sequence is Wilms tumor protein 1-interacting protein homolog (648 aa).

3 disordered regions span residues 27 to 56, 142 to 291, and 306 to 327; these read DGMYGEPNPDMEKTKRMNGSSSTPGNKVYS, SNSL…SPRS, and SPRSSISSHSSRSSRSSRGSMS. Low complexity-rich tracts occupy residues 158–171 and 178–192; these read SPRSSLASSHSSQD and PRSSISSPRSSLVSP. Composition is skewed to polar residues over residues 197–213 and 220–241; these read GTSVISPRSSYASTASD and PRTSLNSYDCGSKPSSNRTSGI. Residues 252-267 are compositionally biased toward low complexity; that stretch reads PRSSTTSPRSSYSDSR. 3 consecutive LIM zinc-binding domains span residues 437–498, 502–561, and 562–631; these read GICV…SGFQ, EKCF…TVFA, and PKCA…RLKT.

The protein belongs to the zyxin/ajuba family.

The protein localises to the cell junction. It is found in the adherens junction. It localises to the nucleus. Functionally, may monitor slit diaphragm protein assembly, a specialized adherens junction characteristic of podocytes. In case of podocyte injury, it shuttles into the nucleus and acts as a transcription regulator. Plays a role in the regulation of cell morphology and cytoskeletal organization. Acts as a transcriptional corepressor for snai1 and snai2/slug and plays a role in regulating neural crest development. The chain is Wilms tumor protein 1-interacting protein homolog (wtip) from Danio rerio (Zebrafish).